The following is a 515-amino-acid chain: 1-pyrroline-5-carboxylate dehydrogenase (515 aa).

Catalysis depends on residues Glu-286 and Cys-320.

The protein belongs to the aldehyde dehydrogenase family. RocA subfamily.

The enzyme catalyses L-glutamate 5-semialdehyde + NAD(+) + H2O = L-glutamate + NADH + 2 H(+). The protein operates within amino-acid degradation; L-proline degradation into L-glutamate; L-glutamate from L-proline: step 2/2. The polypeptide is 1-pyrroline-5-carboxylate dehydrogenase (Oceanobacillus iheyensis (strain DSM 14371 / CIP 107618 / JCM 11309 / KCTC 3954 / HTE831)).